The sequence spans 498 residues: 3-octaprenyl-4-hydroxybenzoate carboxy-lyase (498 aa).

Asn175 serves as a coordination point for Mn(2+). Prenylated FMN contacts are provided by residues 178-180 (IYR), 192-194 (RWL), and 197-198 (RG). Glu241 provides a ligand contact to Mn(2+). Asp290 functions as the Proton donor in the catalytic mechanism.

The protein belongs to the UbiD family. In terms of assembly, homohexamer. Requires prenylated FMN as cofactor. Mn(2+) is required as a cofactor.

Its subcellular location is the cell membrane. It catalyses the reaction a 4-hydroxy-3-(all-trans-polyprenyl)benzoate + H(+) = a 2-(all-trans-polyprenyl)phenol + CO2. The protein operates within cofactor biosynthesis; ubiquinone biosynthesis. Catalyzes the decarboxylation of 3-octaprenyl-4-hydroxy benzoate to 2-octaprenylphenol, an intermediate step in ubiquinone biosynthesis. The protein is 3-octaprenyl-4-hydroxybenzoate carboxy-lyase of Pectobacterium atrosepticum (strain SCRI 1043 / ATCC BAA-672) (Erwinia carotovora subsp. atroseptica).